Here is a 512-residue protein sequence, read N- to C-terminus: 2,3-bisphosphoglycerate-independent phosphoglycerate mutase (512 aa).

Positions 18 and 68 each coordinate Mn(2+). S68 functions as the Phosphoserine intermediate in the catalytic mechanism. Residues H129, 159 to 160, R191, R197, 265 to 268, and K338 contribute to the substrate site; these read RD and RPDR. Mn(2+) is bound by residues D403, H407, D444, H445, and H462.

It belongs to the BPG-independent phosphoglycerate mutase family. Monomer. Mn(2+) serves as cofactor.

It carries out the reaction (2R)-2-phosphoglycerate = (2R)-3-phosphoglycerate. Its pathway is carbohydrate degradation; glycolysis; pyruvate from D-glyceraldehyde 3-phosphate: step 3/5. Functionally, catalyzes the interconversion of 2-phosphoglycerate and 3-phosphoglycerate. The polypeptide is 2,3-bisphosphoglycerate-independent phosphoglycerate mutase (Mesomycoplasma hyopneumoniae (strain 232) (Mycoplasma hyopneumoniae)).